Here is a 250-residue protein sequence, read N- to C-terminus: DNA repair protein RecO (250 aa).

It belongs to the RecO family.

Its function is as follows. Involved in DNA repair and RecF pathway recombination. In Staphylococcus aureus (strain MW2), this protein is DNA repair protein RecO.